We begin with the raw amino-acid sequence, 535 residues long: Atrial natriuretic peptide receptor 3 (535 aa).

A signal peptide spans 1–26 (MRSLLLFTFSACVLLARALLAGGASS). The propeptide occupies 27 to 40 (GGGDTGPGNRRRER). Topologically, residues 41–477 (EALAAQKIEV…CKSCGLEESA (437 aa)) are extracellular. A glycan (N-linked (GlcNAc...) asparagine) is linked at asparagine 81. 2 disulfides stabilise this stretch: cysteine 103–cysteine 131 and cysteine 208–cysteine 256. 2 N-linked (GlcNAc...) asparagine glycosylation sites follow: asparagine 288 and asparagine 389. A helical transmembrane segment spans residues 478-498 (VTGIVVGALLGAGLLMAFYFF). Topologically, residues 499–535 (RKKYRITIERRNHQEESNIGKHRELREDSIRSHFSVA) are cytoplasmic.

The protein belongs to the ANF receptor family. As to quaternary structure, homodimer; disulfide-linked. Interacts with OSTN.

The protein localises to the cell membrane. Receptor for the natriuretic peptide hormones, binding with similar affinities atrial natriuretic peptide NPPA/ANP, brain natriuretic peptide NPPB/BNP, and C-type natriuretic peptide NPPC/CNP. May function as a clearance receptor for NPPA, NPPB and NPPC, regulating their local concentrations and effects. Acts as a regulator of osteoblast differentiation and bone growth by binding to its ligand osteocrin, thereby preventing binding between NPR3/NPR-C and natriuretic peptides, leading to increase cGMP production. The protein is Atrial natriuretic peptide receptor 3 (Npr3) of Rattus norvegicus (Rat).